The chain runs to 105 residues: uncharacterized protein (105 aa).

A run of 2 helical transmembrane segments spans residues 56–76 and 85–105; these read ALIW…VLII and INLN…GVFY.

The protein resides in the membrane. This is an uncharacterized protein from Aedes vexans (Inland floodwater mosquito).